Reading from the N-terminus, the 301-residue chain is Large ribosomal subunit protein uL4 (301 aa).

The segment at 1-223 (MNETKTIDVL…TQALSAQPEV (223 aa)) is large ribosomal subunit protein uL4. Residues 49–105 (QGTHATKTRGQVSGGGKKPWRQKGTGRARQGSTRAPQWVGGGTVHGPQPRSYAQRTP) form a disordered region. The segment at 224–301 (PETNVADQHP…KSDSEKEDAK (78 aa)) is unknown.

The protein belongs to the universal ribosomal protein uL4 family. As to quaternary structure, part of the 50S ribosomal subunit.

One of the primary rRNA binding proteins, this protein initially binds near the 5'-end of the 23S rRNA. It is important during the early stages of 50S assembly. It makes multiple contacts with different domains of the 23S rRNA in the assembled 50S subunit and ribosome. Its function is as follows. Forms part of the polypeptide exit tunnel. The sequence is that of Large ribosomal subunit protein uL4 from Cutibacterium acnes (strain DSM 16379 / KPA171202) (Propionibacterium acnes).